The primary structure comprises 856 residues: DNA mismatch repair protein MutS (856 aa).

607-614 (GPNMAGKS) provides a ligand contact to ATP.

The protein belongs to the DNA mismatch repair MutS family.

In terms of biological role, this protein is involved in the repair of mismatches in DNA. It is possible that it carries out the mismatch recognition step. This protein has a weak ATPase activity. The polypeptide is DNA mismatch repair protein MutS (Cytophaga hutchinsonii (strain ATCC 33406 / DSM 1761 / CIP 103989 / NBRC 15051 / NCIMB 9469 / D465)).